We begin with the raw amino-acid sequence, 81 residues long: Photosystem I iron-sulfur center (81 aa).

2 4Fe-4S ferredoxin-type domains span residues 2–31 and 39–68; these read SHFV…MIPW and IASA…VRVY. 8 residues coordinate [4Fe-4S] cluster: Cys11, Cys14, Cys17, Cys21, Cys48, Cys51, Cys54, and Cys58.

In terms of assembly, the eukaryotic PSI reaction center is composed of at least 11 subunits. [4Fe-4S] cluster serves as cofactor.

It is found in the plastid thylakoid membrane. The enzyme catalyses reduced [plastocyanin] + hnu + oxidized [2Fe-2S]-[ferredoxin] = oxidized [plastocyanin] + reduced [2Fe-2S]-[ferredoxin]. Its function is as follows. Apoprotein for the two 4Fe-4S centers FA and FB of photosystem I (PSI); essential for photochemical activity. FB is the terminal electron acceptor of PSI, donating electrons to ferredoxin. The C-terminus interacts with PsaA/B/D and helps assemble the protein into the PSI complex. Required for binding of PsaD and PsaE to PSI. PSI is a plastocyanin-ferredoxin oxidoreductase, converting photonic excitation into a charge separation, which transfers an electron from the donor P700 chlorophyll pair to the spectroscopically characterized acceptors A0, A1, FX, FA and FB in turn. This Cuscuta exaltata (Tall dodder) protein is Photosystem I iron-sulfur center.